We begin with the raw amino-acid sequence, 249 residues long: PF03932 family protein CutC (249 aa).

The protein belongs to the CutC family.

The protein resides in the cytoplasm. The chain is PF03932 family protein CutC from Bacteroides thetaiotaomicron (strain ATCC 29148 / DSM 2079 / JCM 5827 / CCUG 10774 / NCTC 10582 / VPI-5482 / E50).